A 432-amino-acid chain; its full sequence is Amino-acid acetyltransferase (432 aa).

In terms of domain architecture, N-acetyltransferase spans 286–425; it reads EQLREAGIED…ASLYNFQRNS (140 aa).

Belongs to the acetyltransferase family. ArgA subfamily.

It localises to the cytoplasm. It carries out the reaction L-glutamate + acetyl-CoA = N-acetyl-L-glutamate + CoA + H(+). The protein operates within amino-acid biosynthesis; L-arginine biosynthesis; N(2)-acetyl-L-ornithine from L-glutamate: step 1/4. The sequence is that of Amino-acid acetyltransferase from Pseudomonas aeruginosa (strain LESB58).